Here is a 295-residue protein sequence, read N- to C-terminus: ATP synthase gamma chain (295 aa).

This sequence belongs to the ATPase gamma chain family. As to quaternary structure, F-type ATPases have 2 components, CF(1) - the catalytic core - and CF(0) - the membrane proton channel. CF(1) has five subunits: alpha(3), beta(3), gamma(1), delta(1), epsilon(1). CF(0) has three main subunits: a, b and c.

The protein resides in the cell inner membrane. Functionally, produces ATP from ADP in the presence of a proton gradient across the membrane. The gamma chain is believed to be important in regulating ATPase activity and the flow of protons through the CF(0) complex. The sequence is that of ATP synthase gamma chain from Bdellovibrio bacteriovorus (strain ATCC 15356 / DSM 50701 / NCIMB 9529 / HD100).